A 598-amino-acid polypeptide reads, in one-letter code: MVRDRVIELFRKALAQGADDGRWPAADAGFSVEAPRDPKHGDFAVNAAMVLAKQAGKPPRELAQAIVEAVRAADTAGDLAGLEIAGPGFINVRLSPDLWLRTLARAVAEGPAYGRTAVGQGKKVIVEYVSANPTGPMHVGHGRNAVVGDGVQGLLRWAGFDVSREYYVNDYGAQVQTLARSVHLRYQELHGRAVTMPPKSYPGEYVKDIAAGLKAEYGARFLDAPEAEWLTLFRDHAVQHVLGMIREDLAAVNISFDRWSSEKALYESGTVDRFLRFLEEKDLVYVGKLPPPKSKKGQPPPQAQPDEEGVTAAEDLTLFRSSAYGDEVDRPVKKADGTPTYFCADIAYHWDKRQRADALVDVLGADHGGYVPRLEAAMEALGASRKDLHVVLIQMVSLMRGGESVKMSKRAGTLVSLREVVDEVGRDATRFIFLTRRSDAPLDFDVELAKKQTLDNPVFYVQYGHARLAAIFQKAREAGHAVPEFDLDAARTLGSPEEQDLIRRIAAFPDLLAAAALAYEPHRVAFYLQETIAAFHSWYTQGKKSGEKVIGPDPVKTAARLFLCRALKQVLANGLAVLGVSAPDRMESPETRDIADDV.

A 'HIGH' region motif is present at residues 131–141 (ANPTGPMHVGH). The interval 288–309 (KLPPPKSKKGQPPPQAQPDEEG) is disordered.

It belongs to the class-I aminoacyl-tRNA synthetase family. Monomer.

The protein localises to the cytoplasm. The catalysed reaction is tRNA(Arg) + L-arginine + ATP = L-arginyl-tRNA(Arg) + AMP + diphosphate. This Anaeromyxobacter dehalogenans (strain 2CP-C) protein is Arginine--tRNA ligase.